Consider the following 158-residue polypeptide: uncharacterized protein (158 aa).

2 helical membrane passes run 10-30 (LFFI…LNHF) and 40-60 (YITF…NFFL).

Its subcellular location is the membrane. This is an uncharacterized protein from Schizosaccharomyces pombe (strain 972 / ATCC 24843) (Fission yeast).